Here is a 370-residue protein sequence, read N- to C-terminus: Mitogen-activated protein kinase 3 (370 aa).

Residues Y32–M319 enclose the Protein kinase domain. ATP is bound by residues I38 to V46 and K61. D158 (proton acceptor) is an active-site residue. At T191 the chain carries Phosphothreonine. The short motif at T191 to Y193 is the TXY element. Y193 carries the post-translational modification Phosphotyrosine.

It belongs to the protein kinase superfamily. CMGC Ser/Thr protein kinase family. MAP kinase subfamily. In terms of processing, dually phosphorylated on Thr-191 and Tyr-193, which activates the enzyme.

The enzyme catalyses L-seryl-[protein] + ATP = O-phospho-L-seryl-[protein] + ADP + H(+). The catalysed reaction is L-threonyl-[protein] + ATP = O-phospho-L-threonyl-[protein] + ADP + H(+). With respect to regulation, activated by threonine and tyrosine phosphorylation. This is Mitogen-activated protein kinase 3 (MPK3) from Oryza sativa subsp. japonica (Rice).